A 238-amino-acid polypeptide reads, in one-letter code: Insulin-like growth factor-binding protein 6 (238 aa).

The N-terminal stretch at 1-25 (MTWDGLPTQPLLMLLMLLFAAGSGS) is a signal peptide. One can recognise an IGFBP N-terminal domain in the interval 26 to 108 (ALAGCPGCGA…LIGQGRCQRA (83 aa)). Cystine bridges form between Cys-30/Cys-33, Cys-41/Cys-45, Cys-58/Cys-64, Cys-72/Cys-85, and Cys-79/Cys-105. A disordered region spans residues 104–159 (RCQRARGPSEETTKESKPQGGASRSRDTNHRDRQKNPRTSAAPIRPNPVQDSEMGP). Basic and acidic residues-rich tracts occupy residues 110 to 120 (GPSEETTKESK) and 127 to 138 (RSRDTNHRDRQK). One can recognise a Thyroglobulin type-1 domain in the interval 157-232 (MGPCRRHLDS…SPDGQGSTQC (76 aa)). 3 cysteine pairs are disulfide-bonded: Cys-160-Cys-188, Cys-199-Cys-210, and Cys-212-Cys-232. The disordered stretch occupies residues 218-238 (QPLPVSPDGQGSTQCSARSSG). Positions 226–238 (GQGSTQCSARSSG) are enriched in polar residues.

As to quaternary structure, interacts (via C-terminal domain) with PHB2. In terms of processing, O-glycosylated.

It is found in the secreted. Functionally, IGF-binding proteins prolong the half-life of the IGFs and have been shown to either inhibit or stimulate the growth promoting effects of the IGFs on cell culture. They alter the interaction of IGFs with their cell surface receptors. Activates the MAPK signaling pathway and induces cell migration. The polypeptide is Insulin-like growth factor-binding protein 6 (Igfbp6) (Mus musculus (Mouse)).